A 222-amino-acid chain; its full sequence is MVTIWLGSGRMLVLASASPRRAMLLEAEGFSFIRVEADVSEVLPQGISPESAVKGLALRKAQAGLNRWLNHGGSREDIILGADTIVVLNQQILGKPRDEEEAEAMLTALSGQTHYVYTGVALVNGAGRQECGAVCTAVFFRSLTHEEILEYIATGEPVDKAGAYGIQGLGGHLVDHYEGSLSNVIGLPMEYVKERLSVWGMGLGDIALHEVKDGLPSVKGST.

Asp83 functions as the Proton acceptor in the catalytic mechanism.

This sequence belongs to the Maf family. YhdE subfamily. The cofactor is a divalent metal cation.

The protein localises to the cytoplasm. The enzyme catalyses dTTP + H2O = dTMP + diphosphate + H(+). It catalyses the reaction UTP + H2O = UMP + diphosphate + H(+). Functionally, nucleoside triphosphate pyrophosphatase that hydrolyzes dTTP and UTP. May have a dual role in cell division arrest and in preventing the incorporation of modified nucleotides into cellular nucleic acids. This is dTTP/UTP pyrophosphatase from Desulfitobacterium hafniense (strain Y51).